The following is a 277-amino-acid chain: Carbonyl reductase [NADPH] 1 (277 aa).

Residues 10–34 (VTGSNKGIGLAIVRDLCRLFSGEVV), 63–64 (DI), and Asn-90 contribute to the NADP(+) site. A Phosphoserine modification is found at Ser-30. Glutathione contacts are provided by residues 95 to 97 (FKV) and Gln-106. A substrate-binding site is contributed by Ser-140. Residue 193–194 (AY) coordinates glutathione. Tyr-194 functions as the Proton acceptor in the catalytic mechanism. Residues 194–198 (YGVTK) and 231–233 (VRT) each bind NADP(+).

This sequence belongs to the short-chain dehydrogenases/reductases (SDR) family. In terms of assembly, monomer.

The protein resides in the cytoplasm. It catalyses the reaction a secondary alcohol + NADP(+) = a ketone + NADPH + H(+). The catalysed reaction is prostaglandin F2alpha + NADP(+) = prostaglandin E2 + NADPH + H(+). The enzyme catalyses prostaglandin E1 + NADP(+) = 15-oxoprostaglandin E1 + NADPH + H(+). It carries out the reaction prostaglandin D2 + NADP(+) = 15-oxoprostaglandin D2 + NADPH + H(+). It catalyses the reaction menadione + NADPH + H(+) = menadiol + NADP(+). The catalysed reaction is prostaglandin E2 + NADP(+) = 15-oxoprostaglandin E2 + NADPH + H(+). The enzyme catalyses prostaglandin F2alpha + NADP(+) = 15-oxoprostaglandin F2alpha + NADPH + H(+). It carries out the reaction daunorubicin + NADPH + H(+) = 13-dihydrodaunorubicin + NADP(+). It catalyses the reaction S-nitrosoglutathione + NADPH + H(+) = S-(hydroxysulfenamide)glutathione + NADP(+). The catalysed reaction is a primary alcohol + NADP(+) = an aldehyde + NADPH + H(+). The enzyme catalyses cortisol + NADPH + H(+) = 20beta-dihydrocortisol + NADP(+). It carries out the reaction corticosterone + NADPH + H(+) = 20beta-dihydrocorticosterone + NADP(+). NADPH-dependent reductase with broad substrate specificity. Catalyzes the reduction of a wide variety of carbonyl compounds including quinones, prostaglandins, menadione, plus various xenobiotics. Catalyzes the reduction of the antitumor anthracyclines doxorubicin and daunorubicin to the cardiotoxic compounds doxorubicinol and daunorubicinol. Can convert prostaglandin E to prostaglandin F2-alpha. Can bind glutathione, which explains its higher affinity for glutathione-conjugated substrates. Catalyzes the reduction of S-nitrosoglutathione. In addition, participates in the glucocorticoid metabolism by catalyzing the NADPH-dependent cortisol/corticosterone into 20beta-dihydrocortisol (20b-DHF) or 20beta-corticosterone (20b-DHB), which are weak agonists of NR3C1 and NR3C2 in adipose tissue. In Macaca fascicularis (Crab-eating macaque), this protein is Carbonyl reductase [NADPH] 1.